The primary structure comprises 1299 residues: Protein prickle (1299 aa).

Residues 1–19 (MSSLSTGGGAGGSSGGPGG) are compositionally biased toward gly residues. Disordered stretches follow at residues 1–24 (MSSL…DAAA), 115–181 (ADDG…EVTQ), 241–289 (EEES…PQVP), 368–396 (LPRH…PSSS), and 425–527 (LPPH…DDDS). Basic residues predominate over residues 145–159 (SPRRSKKLLRSLRAH). Residues 168 to 181 (NDTTTANESSEVTQ) are compositionally biased toward polar residues. Residues 263 to 272 (PVPPLPPPPA) show a composition bias toward pro residues. Residues 425 to 434 (LPPHHQQHPG) are compositionally biased toward low complexity. Positions 435–445 (AGMGPGPGSGA) are enriched in gly residues. Over residues 457–469 (PGCSANPKYSNAQ) the composition is skewed to polar residues. The PET domain occupies 515-623 (MDMQRQSHSD…NVRQLMSARP (109 aa)). Over residues 516 to 525 (DMQRQSHSDD) the composition is skewed to basic and acidic residues. 3 consecutive LIM zinc-binding domains span residues 622–686 (RPCD…ETLK), 687–747 (PRCS…MFAE), and 748–810 (YCDY…GEPP). 3 disordered regions span residues 807–865 (GEPP…HQAT), 902–940 (KDLE…GDFQ), and 1026–1249 (ADIL…SSSS). Positions 844–864 (PSSHASSSPPMSPQQQQQHQA) are enriched in low complexity. Composition is skewed to polar residues over residues 922–934 (RASS…SPLN) and 1070–1081 (SLNTPMSTQSAS). Residues 1089–1101 (SILSGASSSSPMS) show a composition bias toward low complexity. Over residues 1136–1150 (GERERDRDKDKEGGG) the composition is skewed to basic and acidic residues. Over residues 1151-1183 (RHGHGHSSRRRRRRKSSSSSSHHRSGSGHRSHS) the composition is skewed to basic residues. The segment covering 1216-1231 (SPSRQQRERERERERE) has biased composition (basic and acidic residues). Low complexity predominate over residues 1238 to 1249 (VCSTCSSSSSSS).

The protein belongs to the prickle / espinas / testin family. Interacts with dsh; PET and LIM domains interact with dsh DEP domain, in wing cells. Interacts with Vang in photoreceptor cells. In terms of tissue distribution, expressed in the wing, leg and eye imaginal disks. Expressed within the photoreceptors of the eye.

It localises to the cell membrane. Functionally, acts in a planar cell polarity (PCP) complex; polarization along the apical/basal axis of epithelial cells. Correct expression of the alternative isoforms is required for PCP signaling in imaginal disks. PCP signaling in the wing disk requires the receptor fz and the cytoplasmic proteins dsh and pk. These act in a feedback loop leading to activation of the jnk cascade and subsequent polarized arrangement of hairs and bristles. Dgo and pk compete with one another for dsh binding, thereby modulating fz dsh activity and ensuring tight control over fz PCP signaling. Vang, stan and pk function together to regulate the establishment of tissue polarity in the adult eye. The protein is Protein prickle of Drosophila melanogaster (Fruit fly).